Here is a 165-residue protein sequence, read N- to C-terminus: Transcription antitermination protein NusB (165 aa).

Positions 1 to 27 (MISDDTDQFNPRDAKSPEIAKGKSAKR) are disordered. Over residues 10–21 (NPRDAKSPEIAK) the composition is skewed to basic and acidic residues.

Belongs to the NusB family.

Involved in transcription antitermination. Required for transcription of ribosomal RNA (rRNA) genes. Binds specifically to the boxA antiterminator sequence of the ribosomal RNA (rrn) operons. This chain is Transcription antitermination protein NusB, found in Pseudomonas syringae pv. tomato (strain ATCC BAA-871 / DC3000).